A 473-amino-acid polypeptide reads, in one-letter code: Reticulon-4 receptor (473 aa).

Positions 1–26 (MKRASAGGSRLLAWVLWLQAWQVAAP) are cleaved as a signal peptide. Disulfide bonds link C27-C33 and C31-C43. The LRRNT domain maps to 27 to 54 (CPGACVCYNEPKVTTSCPQQGLQAVPVG). LRR repeat units follow at residues 55–79 (IPAA…SFRA), 81–103 (RNLT…AFTG), 104–128 (LALL…TFHG), 129–152 (LGRL…LFRG), 153–176 (LAAL…TFRD), 178–200 (GNLT…AFRG), 202–224 (HSLD…AFRD), 225–248 (LGRL…ALAP), and 250–273 (RALQ…PLWA). An N-linked (GlcNAc...) asparagine glycan is attached at N82. An N-linked (GlcNAc...) asparagine glycan is attached at N179. The region spanning 260–310 (NPWVCDCRARPLWAWLQKFRGSSSEVPCSLPQRLAGRDLKRLAANDLQGCA) is the LRRCT domain. Intrachain disulfides connect C264–C287, C266–C335, and C309–C336. The tract at residues 346-447 (VLEPGRPASA…GGGTGDSEGS (102 aa)) is disordered. Residues 413–429 (PRRRPGCSRKNRTRSHC) show a composition bias toward basic residues. Residues 434 to 445 (AGSGGGGTGDSE) show a composition bias toward gly residues. Residue S447 is the site of GPI-anchor amidated serine attachment. A propeptide spans 448–473 (GALPSLTCSLTPLGLALVLWTVLGPC) (removed in mature form).

The protein belongs to the Nogo receptor family. Homodimer. Interacts with MAG. Interacts with RTN4. Interacts with NGFR. Interacts with LINGO1. Interacts with KIAA0319L. Interacts with OLFM1; this inhibits interaction with LINGO1 and NGFR. Interacts with OMG. In terms of processing, N-glycosylated. O-glycosylated. Contains terminal sialic acid groups on its glycan chains. As to expression, widespread in the brain but highest levels in the gray matter. Low levels in heart and kidney; not expressed in oligodendrocytes (white matter).

It is found in the cell membrane. The protein localises to the membrane raft. The protein resides in the cell projection. It localises to the dendrite. Its subcellular location is the axon. It is found in the perikaryon. Its function is as follows. Receptor for RTN4, OMG and MAG. Functions as a receptor for the sialylated gangliosides GT1b and GM1. Besides, functions as a receptor for chondroitin sulfate proteoglycans. Can also bind heparin. Intracellular signaling cascades are triggered via the coreceptor NGFR. Signaling mediates activation of Rho and downstream reorganization of the actin cytoskeleton. Mediates axonal growth inhibition. Plays a role in regulating axon regeneration and neuronal plasticity in the adult central nervous system. Plays a role in postnatal brain development. Required for normal axon migration across the brain midline and normal formation of the corpus callosum. Protects motoneurons against apoptosis; protection against apoptosis is probably mediated via interaction with MAG. Acts in conjunction with RTN4 and LINGO1 in regulating neuronal precursor cell motility during cortical development. Like other family members, plays a role in restricting the number dendritic spines and the number of synapses that are formed during brain development. The chain is Reticulon-4 receptor (RTN4R) from Homo sapiens (Human).